Consider the following 475-residue polypeptide: Aspartyl/glutamyl-tRNA(Asn/Gln) amidotransferase subunit B (475 aa).

Belongs to the GatB/GatE family. GatB subfamily. As to quaternary structure, heterotrimer of A, B and C subunits.

It catalyses the reaction L-glutamyl-tRNA(Gln) + L-glutamine + ATP + H2O = L-glutaminyl-tRNA(Gln) + L-glutamate + ADP + phosphate + H(+). The catalysed reaction is L-aspartyl-tRNA(Asn) + L-glutamine + ATP + H2O = L-asparaginyl-tRNA(Asn) + L-glutamate + ADP + phosphate + 2 H(+). Functionally, allows the formation of correctly charged Asn-tRNA(Asn) or Gln-tRNA(Gln) through the transamidation of misacylated Asp-tRNA(Asn) or Glu-tRNA(Gln) in organisms which lack either or both of asparaginyl-tRNA or glutaminyl-tRNA synthetases. The reaction takes place in the presence of glutamine and ATP through an activated phospho-Asp-tRNA(Asn) or phospho-Glu-tRNA(Gln). The sequence is that of Aspartyl/glutamyl-tRNA(Asn/Gln) amidotransferase subunit B from Chlorobium phaeobacteroides (strain DSM 266 / SMG 266 / 2430).